The primary structure comprises 464 residues: MEYRIEKDTMGEVKVPADRYWAAQTERSRNNFRIGPEASMPVEIIEAFAYLKKAAAFANAELGALTTEKRDLIAMVCDEILANKLADEFPLVIWQTGSGTQSNMNLNEVIANRAHVLQGGALGEKSIIHPNDDVNKSQSSNDTYPTAMHIAAYKKVVEVTIPAIERLQKTFAIKSEAFKDVVKIGRTHLMDATPLTLGQEFSAYAAQLQFGLLALKNTLPHLAQLALGGTAVGTGLNTPKGYDVKVAEYIAQFTQLPFITAENKFEALATHDAIIETHGALKQIAMSLFKIANDIRLLASGPRSGIGEILIPENEPGSSIMPGKVNPTQCEAMTMVAAQVLGNDTTISFAGSQGHFQLNVFKPVMAANFLQSAQLLADVCISFDEHCASGIEPNYPRIQQQLENSLMLVTALNTHIGYENAAKIAKTAHKNGTTLKEEAINLGLVTAEQFDQWVRPQNMVGSLK.

Substrate is bound by residues 98–100 (SGT), 129–132 (HPND), 139–141 (SSN), and T187. H188 functions as the Proton donor/acceptor in the catalytic mechanism. S318 is an active-site residue. Substrate contacts are provided by residues S319 and 324–326 (KVN).

The protein belongs to the class-II fumarase/aspartase family. Fumarase subfamily. Homotetramer.

The protein localises to the cytoplasm. It carries out the reaction (S)-malate = fumarate + H2O. It participates in carbohydrate metabolism; tricarboxylic acid cycle; (S)-malate from fumarate: step 1/1. Its function is as follows. Involved in the TCA cycle. Catalyzes the stereospecific interconversion of fumarate to L-malate. This Haemophilus ducreyi (strain 35000HP / ATCC 700724) protein is Fumarate hydratase class II.